The sequence spans 279 residues: Thiazole synthase (279 aa).

K116 (schiff-base intermediate with DXP) is an active-site residue. 1-deoxy-D-xylulose 5-phosphate contacts are provided by residues G177, 203–204 (AG), and 225–226 (NS).

It belongs to the ThiG family. In terms of assembly, homotetramer. Forms heterodimers with either ThiH or ThiS.

It is found in the cytoplasm. The enzyme catalyses [ThiS sulfur-carrier protein]-C-terminal-Gly-aminoethanethioate + 2-iminoacetate + 1-deoxy-D-xylulose 5-phosphate = [ThiS sulfur-carrier protein]-C-terminal Gly-Gly + 2-[(2R,5Z)-2-carboxy-4-methylthiazol-5(2H)-ylidene]ethyl phosphate + 2 H2O + H(+). It participates in cofactor biosynthesis; thiamine diphosphate biosynthesis. Functionally, catalyzes the rearrangement of 1-deoxy-D-xylulose 5-phosphate (DXP) to produce the thiazole phosphate moiety of thiamine. Sulfur is provided by the thiocarboxylate moiety of the carrier protein ThiS. In vitro, sulfur can be provided by H(2)S. This chain is Thiazole synthase, found in Trichodesmium erythraeum (strain IMS101).